Consider the following 65-residue polypeptide: Large ribosomal subunit protein uL29 (65 aa).

This sequence belongs to the universal ribosomal protein uL29 family.

In Psychrobacter arcticus (strain DSM 17307 / VKM B-2377 / 273-4), this protein is Large ribosomal subunit protein uL29.